A 357-amino-acid chain; its full sequence is NADH-quinone oxidoreductase subunit H (357 aa).

8 consecutive transmembrane segments (helical) span residues 22–42 (VAII…LMLV), 94–114 (IYLF…VWAV), 130–150 (LLYV…AGWA), 164–184 (AALL…VVMI), 199–219 (GGII…FFIS), 254–274 (FFLA…IMFF), 294–314 (IPGM…YLWV), and 333–353 (VFLP…QLQL).

It belongs to the complex I subunit 1 family. As to quaternary structure, NDH-1 is composed of 14 different subunits. Subunits NuoA, H, J, K, L, M, N constitute the membrane sector of the complex.

The protein resides in the cell inner membrane. It carries out the reaction a quinone + NADH + 5 H(+)(in) = a quinol + NAD(+) + 4 H(+)(out). Its function is as follows. NDH-1 shuttles electrons from NADH, via FMN and iron-sulfur (Fe-S) centers, to quinones in the respiratory chain. The immediate electron acceptor for the enzyme in this species is believed to be ubiquinone. Couples the redox reaction to proton translocation (for every two electrons transferred, four hydrogen ions are translocated across the cytoplasmic membrane), and thus conserves the redox energy in a proton gradient. This subunit may bind ubiquinone. This is NADH-quinone oxidoreductase subunit H from Vesicomyosocius okutanii subsp. Calyptogena okutanii (strain HA).